Consider the following 333-residue polypeptide: D-fructose 1,6-bisphosphatase class 2/sedoheptulose 1,7-bisphosphatase (333 aa).

Residues Asp-33, Glu-57, Asp-85, and Glu-88 each coordinate Mn(2+). Substrate contacts are provided by residues 88–90 (EGT), Tyr-119, 164–166 (RTR), and 186–188 (DGD). Residue Glu-213 participates in Mn(2+) binding.

This sequence belongs to the FBPase class 2 family. As to quaternary structure, homotetramer. Requires Mn(2+) as cofactor.

It carries out the reaction beta-D-fructose 1,6-bisphosphate + H2O = beta-D-fructose 6-phosphate + phosphate. It catalyses the reaction D-sedoheptulose 1,7-bisphosphate + H2O = D-sedoheptulose 7-phosphate + phosphate. It functions in the pathway carbohydrate biosynthesis; Calvin cycle. Catalyzes the hydrolysis of fructose 1,6-bisphosphate (Fru 1,6-P2) and sedoheptulose 1,7-bisphosphate (Sed 1,7-P2) to fructose 6-phosphate and sedoheptulose 7-phosphate, respectively. The polypeptide is D-fructose 1,6-bisphosphatase class 2/sedoheptulose 1,7-bisphosphatase (Prochlorococcus marinus (strain MIT 9312)).